Consider the following 331-residue polypeptide: Aflatoxin B1 aldehyde reductase member 4 (331 aa).

Asp44 serves as a coordination point for NADP(+). Tyr49 (proton donor) is an active-site residue. A Phosphoserine modification is found at Ser85. Residue His113 participates in substrate binding. NADP(+) is bound by residues 143-144 (SN), Gln169, 198-208 (NPLAGGLLTGK), and Arg222. A substrate-binding site is contributed by Tyr232. NADP(+) is bound at residue 290–298 (SSLEQLEQN).

Belongs to the aldo/keto reductase family. Aldo/keto reductase 2 subfamily. In terms of tissue distribution, mainly expressed in uterus.

Can reduce the dialdehyde protein-binding form of aflatoxin B1 (AFB1) to the non-binding AFB1 dialcohol. May be involved in protection of liver against the toxic and carcinogenic effects of AFB1, a potent hepatocarcinogen. The sequence is that of Aflatoxin B1 aldehyde reductase member 4 (AKR7L) from Homo sapiens (Human).